An 88-amino-acid chain; its full sequence is Protein transport protein SBH2 (88 aa).

The segment at 1 to 42 (MAASVPPGGQRILQKRRQAQSIKEKQAKQTPTSTRQAGYGGS) is disordered. Residues 1-61 (MAASVPPGGQ…DEANGFRVDS (61 aa)) are Cytoplasmic-facing. A compositionally biased stretch (polar residues) spans 28 to 42 (KQTPTSTRQAGYGGS). A helical transmembrane segment spans residues 62–82 (LVVLFLSVGFIFSVIALHLLT).

The protein belongs to the SEC61-beta family. Component of the heterotrimeric Ssh1 complex, which is composed of SSH1, SBH2 and SSS1.

Its subcellular location is the endoplasmic reticulum membrane. Part of the Ssh1 complex, which probably is the major component of a channel-forming translocon complex that may function exclusively in the cotranslational pathway of protein endoplasmic reticulum (ER) import. The chain is Protein transport protein SBH2 (SBH2) from Saccharomyces cerevisiae (strain ATCC 204508 / S288c) (Baker's yeast).